The primary structure comprises 67 residues: MKAKELREKAPEELNLQLNDLKTELFTLRFQLATGQLENPMRIKEVKKSIAQIKTILREEELKACED.

Belongs to the universal ribosomal protein uL29 family.

In Clostridium acetobutylicum (strain ATCC 824 / DSM 792 / JCM 1419 / IAM 19013 / LMG 5710 / NBRC 13948 / NRRL B-527 / VKM B-1787 / 2291 / W), this protein is Large ribosomal subunit protein uL29.